We begin with the raw amino-acid sequence, 175 residues long: Transcription factor HES-3 (175 aa).

The 49-residue stretch at 1-49 (MEKKRRARINVSLEQLRSLLERHYSHQIRKRKLEKADILELSVKYMRSL) folds into the bHLH domain. One can recognise an Orange domain in the interval 65 to 98 (YPSGFQGGLRGVSQRLRPGEGDSGLRCPLLLQRR). Residues 126–166 (RAAGGSHSPQSPLPLPGGLLESSTDVVAPHPASNCQAESTR) are disordered. Positions 129–148 (GGSHSPQSPLPLPGGLLESS) are enriched in low complexity. Positions 172–175 (WRPW) match the WRPW motif motif.

Transcription repression requires formation of a complex with a corepressor protein of the Groucho/TLE family.

The protein localises to the nucleus. Transcriptional repressor of genes that require a bHLH protein for their transcription. This is Transcription factor HES-3 (Hes3) from Mus musculus (Mouse).